The sequence spans 490 residues: Cytochrome P450 71A22 (490 aa).

A helical transmembrane segment spans residues glutamate 2 to isoleucine 22. Cysteine 432 provides a ligand contact to heme.

It belongs to the cytochrome P450 family. It depends on heme as a cofactor.

It is found in the membrane. This Arabidopsis thaliana (Mouse-ear cress) protein is Cytochrome P450 71A22 (CYP71A22).